We begin with the raw amino-acid sequence, 280 residues long: DNA repair protein XRCC2 (280 aa).

Residue Ser-10 is modified to Phosphoserine.

This sequence belongs to the RecA family. RAD51 subfamily. As to quaternary structure, interacts with RAD51D. Part of the BCDX2 complex consisting of RAD51B, RAD51C, RAD51D and XRCC2; the complex has a ring-like structure arranged into a flat disk around a central channel. In the absence of DNA, the BCDX2 subcomplex XRCC2:RAD51D formed a multimeric ring structure; in the presence of single-stranded DNA it formed a filamentous structure with the ssDNA.

Its subcellular location is the nucleus. The protein resides in the cytoplasm. It is found in the cytoskeleton. It localises to the microtubule organizing center. The protein localises to the centrosome. Its function is as follows. Involved in the homologous recombination repair (HRR) pathway of double-stranded DNA, thought to repair chromosomal fragmentation, translocations and deletions. Part of the RAD51 paralog protein complex BCDX2 which acts in the BRCA1-BRCA2-dependent HR pathway. Upon DNA damage, BCDX2 acts downstream of BRCA2 recruitment and upstream of RAD51 recruitment. BCDX2 binds predominantly to the intersection of the four duplex arms of the Holliday junction and to junction of replication forks. The BCDX2 complex was originally reported to bind single-stranded DNA, single-stranded gaps in duplex DNA and specifically to nicks in duplex DNA. The polypeptide is DNA repair protein XRCC2 (XRCC2) (Homo sapiens (Human)).